The chain runs to 477 residues: Cytochrome P450 monooxygenase poxC (477 aa).

A helical transmembrane segment spans residues 24–41 (AWHFAVLSFVYVIARSIY). Residue Cys420 coordinates heme.

Belongs to the cytochrome P450 family. Heme is required as a cofactor.

It localises to the membrane. Its pathway is secondary metabolite biosynthesis. Its function is as follows. Cytochrome P450 monooxygenase; part of the gene cluster that mediates the biosynthesis of oxaleimides, cytotoxic compounds containing an unusual disubstituted succinimide moiety. The first step of the pathway is provided by the HR-PKS poxF that serves in a new mode of collaborative biosynthesis with the PKS-NRPS poxE, by providing the olefin containing amino acid substrate via the synthesis of an ACP-bound dec-4-enoate. The cytochrome P450 monooxygenase poxM-catalyzed oxidation at the alpha-position creates the enzyme-bound 2-hydroxydec-4-enoyl-ACP thioester, which may be prone to spontaneous hydrolysis to yield 2-hydroxydec-4-enoic acid due to increased electrophilicity of the carbonyl. 2-hydroxydec-4-enoic acid can then be further oxidized by poxM to yield the alpha-ketoacid 2-oxodec-4-enoicacid, which is reductively aminated by the aminotransferase poxL to yield (S,E)-2-aminodec-4-enoic acid. The Hybrid PKS-NRPS synthetase poxE then performs condensation between the octaketide product of its PKS modules and the amino group of (S,E)-2-aminodec-4-enoic acid which is activated and incorporated by the adenylation domain. The resulting aminoacyl product can be cyclized by the Diels-Alderase PoxQ and reductively released by the reductive (R) domain of poxE to yield an aldehyde intermediate. The released aldehyde is then substrate for a Knoevenagel condensation by the hydrolyase poxO followed by an oxidation at the 5-position of the pyrrolidone ring. The presence of the olefin from the amino acid building block allows for migration of the substituted allyl group to occur. This allylic transposition reaction takes place in a conjugate addition, semipinacol-like fashion to yield a succinimide intermediate. Iterative two-electron oxidations of the C7 methyl of the succinimide intermediate to the carboxylic acid can be catalyzed by one of two remaining cytochrome P450 monooxygenasess poxC or poxD to yield oxaleimide A. Subsequent oxidation yields the maleimide scaffold oxaleimide I. Both oxaleimide A and oxaleimide I can undergo oxidative modifications in the decalin ring to yield the series of products oxaleimides B to H. This Penicillium oxalicum (strain 114-2 / CGMCC 5302) (Penicillium decumbens) protein is Cytochrome P450 monooxygenase poxC.